Here is a 499-residue protein sequence, read N- to C-terminus: Glycerol kinase (499 aa).

ADP is bound at residue threonine 13. ATP is bound by residues threonine 13, threonine 14, and serine 15. Threonine 13 is a sn-glycerol 3-phosphate binding site. Arginine 17 is a binding site for ADP. Arginine 83, glutamate 84, tyrosine 135, and aspartate 244 together coordinate sn-glycerol 3-phosphate. The glycerol site is built by arginine 83, glutamate 84, tyrosine 135, aspartate 244, and glutamine 245. Residues threonine 266 and glycine 309 each coordinate ADP. Positions 266, 309, 313, and 410 each coordinate ATP. Residues glycine 410 and asparagine 414 each coordinate ADP.

The protein belongs to the FGGY kinase family.

The enzyme catalyses glycerol + ATP = sn-glycerol 3-phosphate + ADP + H(+). Its pathway is polyol metabolism; glycerol degradation via glycerol kinase pathway; sn-glycerol 3-phosphate from glycerol: step 1/1. With respect to regulation, inhibited by fructose 1,6-bisphosphate (FBP). Key enzyme in the regulation of glycerol uptake and metabolism. Catalyzes the phosphorylation of glycerol to yield sn-glycerol 3-phosphate. The chain is Glycerol kinase from Paraburkholderia xenovorans (strain LB400).